A 211-amino-acid chain; its full sequence is MPAVRIKICGITRVEDALAAAAAGADAIGLVFYAKSPRAVNIHRAREIVRALPPFVTSVGLFVNASRCELGEILDAVPLDLLQFHGDERAEDCEGHRRPYLKALRMKPGDDILARVADYPGAAGILLDTYVEGVPGGTGAAFDWSLVPAGLGKPLVLAGGLTANNVADAVARVQPYAVDVSGGVEASKGIKDAAKVRAFVDAVRSRGRDEA.

This sequence belongs to the TrpF family.

It carries out the reaction N-(5-phospho-beta-D-ribosyl)anthranilate = 1-(2-carboxyphenylamino)-1-deoxy-D-ribulose 5-phosphate. It participates in amino-acid biosynthesis; L-tryptophan biosynthesis; L-tryptophan from chorismate: step 3/5. In Pseudomonas paraeruginosa (strain DSM 24068 / PA7) (Pseudomonas aeruginosa (strain PA7)), this protein is N-(5'-phosphoribosyl)anthranilate isomerase.